A 452-amino-acid chain; its full sequence is Neuromedin-K receptor (452 aa).

The Extracellular segment spans residues 1–71 (MASVPRGENW…TNQFVQPSWR (71 aa)). N-linked (GlcNAc...) asparagine glycosylation is found at N9, N23, N40, and N60. The helical transmembrane segment at 72–94 (IALWSLAYGLVVAVAVFGNLIVI) threads the bilayer. Topologically, residues 95–104 (WIILAHKRMR) are cytoplasmic. The helical transmembrane segment at 105 to 126 (TVTNYFLVNLAFSDASVAAFNT) threads the bilayer. At 127 to 146 (LINFIYGLHSEWYFGANYCR) the chain is on the extracellular side. C145 and C220 are oxidised to a cystine. A helical membrane pass occupies residues 147 to 168 (FQNFFPITAVFASIYSMTAIAV). The Cytoplasmic segment spans residues 169 to 188 (DRYMAIIDPLKPRLSATATK). The chain crosses the membrane as a helical span at residues 189-209 (IVIGSIWILAFLLAFPQCLYS). The Extracellular portion of the chain corresponds to 210 to 232 (KIKVMPGRTLCYVQWPEGPKQHF). Residues 233 to 257 (TYHIIVIILVYCFPLLIMGVTYTIV) form a helical membrane-spanning segment. Residues 258-286 (GITLWGGEIPGDTCDKYHEQLKAKRKVVK) are Cytoplasmic-facing. Residues 287 to 308 (MMIIVVVTFAICWLPYHVYFIL) form a helical membrane-spanning segment. The Extracellular portion of the chain corresponds to 309–321 (TAIYQQLNRWKYI). The helical transmembrane segment at 322-346 (QQVYLASFWLAMSSTMYNPIIYCCL) threads the bilayer. The Cytoplasmic portion of the chain corresponds to 347–452 (NKRFRAGFKR…SPYTSVDEYS (106 aa)). C361 carries S-palmitoyl cysteine lipidation. Positions 400–452 (FDPNDGDPTKSSRKKRAVPRDPSANGCSHRGSKSASTTSSFISSPYTSVDEYS) are disordered. Residues 432–452 (KSASTTSSFISSPYTSVDEYS) show a composition bias toward low complexity.

Belongs to the G-protein coupled receptor 1 family. Post-translationally, the anchoring of this receptor to the plasma membrane is probably mediated by the palmitoylation of a cysteine residue.

Its subcellular location is the cell membrane. This is a receptor for the tachykinin neuropeptide neuromedin-K (neurokinin B). It is associated with G proteins that activate a phosphatidylinositol-calcium second messenger system. The rank order of affinity of this receptor to tachykinins is: neuromedin-K &gt; substance K &gt; substance P. The chain is Neuromedin-K receptor (Tacr3) from Rattus norvegicus (Rat).